The chain runs to 67 residues: MGLVWSLISNSIQTIIADFAISVIDAALFFLMLLALAVVTVFLFWLIVAIGRSLVARCSRGARYRPV.

Residue glycine 2 is the site of N-myristoyl glycine; by host attachment. An endoplasmic reticulum retention signal region spans residues 2 to 15 (GLVWSLISNSIQTI). At 2 to 27 (GLVWSLISNSIQTIIADFAISVIDAA) the chain is on the virion surface side. A helical membrane pass occupies residues 28–48 (LFFLMLLALAVVTVFLFWLIV). The Intravirion segment spans residues 49–67 (AIGRSLVARCSRGARYRPV).

The protein belongs to the arteriviridae E protein family. In terms of assembly, homomultimer. Associates with itself into higher-order structures, including dimers, trimers and tetramers. Associates with the GP2b-GP3-GP4 complex. In terms of processing, myristoylated. Not glycosylated.

It is found in the virion membrane. The protein resides in the host endoplasmic reticulum membrane. The protein localises to the host Golgi apparatus membrane. Its subcellular location is the secreted. Its function is as follows. Minor envelope protein. May function as a viroporin in the virion envelope that facilitates uncoating of the virus in order to release the genomic RNA into the cytoplasm for subsequent replication. This is Envelope small membrane protein (GP2a) from Equidae (horses).